The primary structure comprises 315 residues: Protein-export membrane protein SecF (315 aa).

6 helical membrane-spanning segments follow: residues 35–55, 152–172, 181–201, 205–225, 242–264, and 282–302; these read MVLYPLVVFLVAALILAVHFP, QGIKAVIYAFIGMAIVVFLFF, IIFSAFSDMVIALATMGILGI, TATIAALLMLIGYTVDSNILL, LSAVSTGFTMSTTTLGALFILWL, and LLADFMNTWIFNAGVLRWYIA.

This sequence belongs to the SecD/SecF family. SecF subfamily. In terms of assembly, part of the protein translocation apparatus. Forms a complex with SecD.

The protein resides in the cell membrane. In terms of biological role, involved in protein export. The polypeptide is Protein-export membrane protein SecF (Thermococcus gammatolerans (strain DSM 15229 / JCM 11827 / EJ3)).